Here is a 330-residue protein sequence, read N- to C-terminus: 2-keto-3-deoxygluconate permease (330 aa).

Transmembrane regions (helical) follow at residues 10–30, 42–62, 77–97, 100–120, 140–160, 163–183, 200–220, 224–244, 254–274, and 289–309; these read VPGG…TFAP, ALIT…GATI, LLLG…QFIP, GIQS…VMNE, GAFA…TFGV, LAAF…LGCI, PAII…GMLI, LLGI…LFLL, VAGV…YALA, and AIIA…TVWV.

It belongs to the KdgT transporter family.

It is found in the cell membrane. It carries out the reaction 2-dehydro-3-deoxy-D-gluconate(in) + H(+)(in) = 2-dehydro-3-deoxy-D-gluconate(out) + H(+)(out). Functionally, catalyzes the proton-dependent uptake of 2-keto-3-deoxygluconate (KDG) into the cell. The chain is 2-keto-3-deoxygluconate permease from Bacillus subtilis (strain 168).